The sequence spans 421 residues: Phosphatidate cytidylyltransferase 1 (421 aa).

Methionine 1 bears the N-acetylmethionine mark. The segment covering methionine 1–threonine 12 has biased composition (polar residues). The segment at methionine 1–valine 26 is disordered. 8 helical membrane-spanning segments follow: residues isoleucine 60–valine 80, leucine 102–glycine 122, tyrosine 149–leucine 169, tryptophan 183–phenylalanine 203, isoleucine 206–phenylalanine 226, glycine 246–glycine 266, leucine 321–phenylalanine 341, and valine 369–valine 389.

This sequence belongs to the CDS family. The cofactor is Mg(2+).

The protein localises to the membrane. The catalysed reaction is a 1,2-diacyl-sn-glycero-3-phosphate + CTP + H(+) = a CDP-1,2-diacyl-sn-glycerol + diphosphate. The protein operates within phospholipid metabolism; CDP-diacylglycerol biosynthesis; CDP-diacylglycerol from sn-glycerol 3-phosphate: step 3/3. Functionally, may be involved in the synthesis of minor phospholipids and in modulation of IP3-mediated signal transduction. This chain is Phosphatidate cytidylyltransferase 1, found in Arabidopsis thaliana (Mouse-ear cress).